A 596-amino-acid chain; its full sequence is Selenocysteine-specific elongation factor (596 aa).

The 213-residue stretch at 5–217 (RVNVNVGVLG…LLTSQISIPT (213 aa)) folds into the tr-type G domain. The G1 stretch occupies residues 14-21 (GHIDSGKT). GDP-binding residues include Gly19, Thr21, and Ala22. Gly19, Thr21, and Ala22 together coordinate GTP. Thr21 is a Mg(2+) binding site. The G2 stretch occupies residues 46–50 (GITLD). Positions 48 and 92 each coordinate Mg(2+). Residues 92 to 95 (DCPG) are G3. The segment at 146 to 149 (NKID) is G4. Residues Asp149 and Lys187 each coordinate GDP. GTP contacts are provided by Asp149 and Lys187. The tract at residues 185-187 (AAK) is G5. Position 537 is a phosphoserine (Ser537). Thr545 is modified (phosphothreonine). Residues 547-553 (ALKKRAR) carry the Nuclear localization signal motif. Residues 548 to 573 (LKKRARAGRGEATRQEESAERSEPSQ) form a disordered region. A compositionally biased stretch (basic and acidic residues) spans 555–571 (GRGEATRQEESAERSEP). Residue Arg556 is modified to Omega-N-methylarginine.

The protein belongs to the TRAFAC class translation factor GTPase superfamily. Classic translation factor GTPase family. SelB subfamily. The cofactor is Mg(2+). It depends on Mn(2+) as a cofactor.

The protein localises to the cytoplasm. It is found in the nucleus. It catalyses the reaction GTP + H2O = GDP + phosphate + H(+). Its function is as follows. Translation factor required for the incorporation of the rare amino acid selenocysteine encoded by UGA codons. Replaces the eRF1-eRF3-GTP ternary complex for the insertion of selenocysteine directed by the UGA codon. Insertion of selenocysteine at UGA codons is mediated by SECISBP2 and EEFSEC: SECISBP2 (1) specifically binds the SECIS sequence once the 80S ribosome encounters an in-frame UGA codon and (2) contacts the RPS27A/eS31 of the 40S ribosome before ribosome stalling. (3) GTP-bound EEFSEC then delivers selenocysteinyl-tRNA(Sec) to the 80S ribosome and adopts a preaccommodated state conformation. (4) After GTP hydrolysis, EEFSEC dissociates from the assembly, selenocysteinyl-tRNA(Sec) accommodates, and peptide bond synthesis and selenoprotein elongation occur. The polypeptide is Selenocysteine-specific elongation factor (Homo sapiens (Human)).